A 189-amino-acid polypeptide reads, in one-letter code: Myb-like protein T (189 aa).

The region spanning 121-172 is the Myb-like domain; the sequence is NWSPDEQKALMVEVSTLGNKSEINWFFISQQLFLKGISRNARECQRKHESIQ.

This chain is Myb-like protein T (mybT), found in Dictyostelium discoideum (Social amoeba).